The primary structure comprises 437 residues: U1 small nuclear ribonucleoprotein 70 kDa (437 aa).

At T2 the chain carries N-acetylthreonine. Residues 48–79 (FEDPRDAPPPTRAETREERMERKRREKIERRQ) are disordered. The segment covering 60 to 79 (AETREERMERKRREKIERRQ) has biased composition (basic and acidic residues). Residues 92 to 202 (HNDPNAQGDA…GGGLGGTRRG (111 aa)) form a required for interaction with U1 RNA region. Residues 103–181 (KTLFVARVNY…RRVLVDVERG (79 aa)) form the RRM domain. K118 is modified (N6-acetyllysine). Y126 carries the phosphotyrosine modification. The interval 187 to 437 (WRPRRLGGGL…NGYLMEAAPE (251 aa)) is disordered. Over residues 192 to 201 (LGGGLGGTRR) the composition is skewed to gly residues. Positions 207–254 (NIRHSGRDDTSRYDERPGPSPLPHRDRDRDRERERRERSRERDKERER) are enriched in basic and acidic residues. Residues S226 and S268 each carry the phosphoserine modification. A compositionally biased stretch (basic residues) spans 255 to 268 (RRSRSRDRRRRSRS). 2 stretches are compositionally biased toward basic and acidic residues: residues 269–286 (RDKE…DKDR) and 294–310 (RSRE…EELR). Residue S320 is modified to Phosphoserine. Positions 343–393 (PEEKGRDRDRERRRSHRSERERRRDRDRDRDRDREHKRGERGSERGRDEAR) are enriched in basic and acidic residues. Residue K346 forms a Glycyl lysine isopeptide (Lys-Gly) (interchain with G-Cter in SUMO2) linkage. Position 410 is a phosphoserine (S410).

As to quaternary structure, component of the U1 snRNP. The U1 snRNP is composed of the U1 snRNA and the 7 core Sm proteins SNRPB, SNRPD1, SNRPD2, SNRPD3, SNRPE, SNRPF and SNRPG that assemble in a heptameric protein ring on the Sm site of the small nuclear RNA to form the core snRNP, and at least three U1 snRNP-specific proteins SNRNP70/U1-70K, SNRPA/U1-A and SNRPC/U1-C. Interacts with SCNM1. Found in a pre-mRNA splicing complex with SFRS4, SFRS5, SNRNP70, SNRPA1, SRRM1 and SRRM2. Found in a pre-mRNA exonic splicing enhancer (ESE) complex with SNRNP70, SNRPA1, SRRM1 and TRA2B/SFRS10. Interacts with dephosphorylated SFRS13A and SFPQ. Interacts with NUDT21/CPSF5, CPSF6, SCAF11, and ZRANB2. Interacts with GEMIN5. Interacts with FUS. In terms of processing, the N-terminus is blocked. Extensively phosphorylated on serine residues in the C-terminal region.

The protein resides in the nucleus speckle. It localises to the nucleus. The protein localises to the nucleoplasm. Component of the spliceosomal U1 snRNP, which is essential for recognition of the pre-mRNA 5' splice-site and the subsequent assembly of the spliceosome. SNRNP70 binds to the loop I region of U1-snRNA. Its function is as follows. Truncated isoforms that lack the RRM domain cannot bind U1-snRNA. This Homo sapiens (Human) protein is U1 small nuclear ribonucleoprotein 70 kDa (SNRNP70).